The sequence spans 261 residues: Esterase citA (261 aa).

Catalysis depends on charge relay system residues S122, D207, and H235.

It belongs to the LovG family.

The protein operates within mycotoxin biosynthesis. Non-reducing polyketide synthase; part of the gene cluster that mediates the biosynthesis of the mycotoxin citrinin, a hepato-nephrotoxic compound to humans due to inhibition of respiration complex III. The pathway begins with the synthesis of a keto-aldehyde intermediate by the citrinin PKS (pksCT also named citS) from successive condensations of 4 malonyl-CoA units, presumably with a simple acetyl-CoA starter unit. Release of the keto-aldehyde intermediate is consistent with the presence of the C-terminal reductive release domain. CitA collaborates with citS by catalyzing the hydrolysis of ACP-bound acyl intermediates to free the ACP from stalled intermediates. CitB then catalyzes the oxidation of the C-12 methyl of the ketone intermediate to an alcohol intermediate which is further oxidized by the oxidoreductase citC to produce a bisaldehyde intermediate. The fourth catalytic step is catalyzed by the citD aldehyde dehydrogenase. The final transformation is the reduction of C-3 by citE to provide the chemically stable citrinin nucleus. CitE appears highly selective for its substrate as its presence in any context other than a full complement of citS and citA-D does not result in observable new compounds. This is Esterase citA from Monascus ruber (Mold).